The chain runs to 169 residues: Ribosome maturation factor RimP (169 aa).

This sequence belongs to the RimP family.

The protein localises to the cytoplasm. Its function is as follows. Required for maturation of 30S ribosomal subunits. This is Ribosome maturation factor RimP from Pseudomonas putida (strain ATCC 700007 / DSM 6899 / JCM 31910 / BCRC 17059 / LMG 24140 / F1).